The sequence spans 540 residues: MSVSYRGPRWSSFVHVSQHSCRFVAPTCAEGAQGCSEFGAFPVFEERGMCAARRMRRAAIAACCVFARGAAANPYQQLLRHRLEALRPGARAQIEFDVAHCGYEKARLRSAGTYVLGSELEIRGHSAGDFGLPRFGIKPIIGVRSPRYNNLVVSIDTARVTSIGNISRINADIGVDLYSNVRGRELIRMRRAEHEEKAAQNGERIKSPSVELALIDELEVLFTRAQSLVRREFHMGDARLVHLRTRAAGFSEHSEKARRVRLAYDRTQREFEQEERLFAQVCDPFAAVCAVGGGDEARRDFLLQLAEAVPREVPLSLVSLHATDAHSLAAAQEMALLERAAQRSERDLYAVRVGAVVSMGTRKTFILFKGDGTESLEGSGTVALHMPSVNAQVEVKVPYAERGKHSRDKVGVYGKSQWNPLEIAYKVFERREERAQEQEQEQYCEDSLARETRKMEGLEVQGKQLFAAQETALRTREALRLDLAKVERAAARGVVGGNRLARARCEYAVAQLRAACAKLHMLRFNLGVVRAFGLVPQVAP.

Positions 1 to 20 (MSVSYRGPRWSSFVHVSQHS) are cleaved as a signal peptide.

It belongs to the TP096X family.

This is an uncharacterized protein from Treponema pallidum (strain Nichols).